A 336-amino-acid chain; its full sequence is Dihydroorotate dehydrogenase (quinone) (336 aa).

FMN contacts are provided by residues 62-66 and threonine 86; that span reads AGLDK. Lysine 66 is a binding site for substrate. Substrate is bound at residue 111–115; the sequence is NRMGF. 2 residues coordinate FMN: asparagine 139 and asparagine 172. Asparagine 172 is a substrate binding site. Residue serine 175 is the Nucleophile of the active site. Asparagine 177 provides a ligand contact to substrate. Lysine 217 and threonine 245 together coordinate FMN. Residue 246–247 participates in substrate binding; sequence NT. Residues glycine 268, glycine 297, and 318-319 each bind FMN; that span reads YS.

It belongs to the dihydroorotate dehydrogenase family. Type 2 subfamily. As to quaternary structure, monomer. It depends on FMN as a cofactor.

Its subcellular location is the cell membrane. It carries out the reaction (S)-dihydroorotate + a quinone = orotate + a quinol. It participates in pyrimidine metabolism; UMP biosynthesis via de novo pathway; orotate from (S)-dihydroorotate (quinone route): step 1/1. Functionally, catalyzes the conversion of dihydroorotate to orotate with quinone as electron acceptor. The polypeptide is Dihydroorotate dehydrogenase (quinone) (Yersinia enterocolitica serotype O:8 / biotype 1B (strain NCTC 13174 / 8081)).